Here is a 214-residue protein sequence, read N- to C-terminus: Alkaline phosphatase-like protein (214 aa).

3 helical membrane-spanning segments follow: residues 48–68 (LGII…ALIL), 141–161 (FLIL…CLGA), and 177–197 (YSSV…LIFV).

The protein belongs to the DedA family.

Its subcellular location is the cell membrane. The polypeptide is Alkaline phosphatase-like protein (apl) (Lactococcus lactis subsp. lactis (strain IL1403) (Streptococcus lactis)).